We begin with the raw amino-acid sequence, 718 residues long: uncharacterized protein (718 aa).

Transmembrane regions (helical) follow at residues 9–29 (VIST…IWFF), 60–80 (NVFF…LHIG), 83–103 (IQYI…GAVG), 136–156 (VMIL…YLFF), 391–411 (IVVF…GYWI), and 506–526 (LLDT…LWPD).

The protein belongs to the YccS/YhfK family.

It is found in the cell membrane. This is an uncharacterized protein from Haemophilus influenzae (strain ATCC 51907 / DSM 11121 / KW20 / Rd).